The chain runs to 598 residues: Elongation factor 4 (598 aa).

Positions 4 to 186 (SHIRNFSIIA…VIVNKIPPPE (183 aa)) constitute a tr-type G domain. Residues 16-21 (DHGKST) and 133-136 (NKID) each bind GTP.

This sequence belongs to the TRAFAC class translation factor GTPase superfamily. Classic translation factor GTPase family. LepA subfamily.

Its subcellular location is the cell inner membrane. The enzyme catalyses GTP + H2O = GDP + phosphate + H(+). In terms of biological role, required for accurate and efficient protein synthesis under certain stress conditions. May act as a fidelity factor of the translation reaction, by catalyzing a one-codon backward translocation of tRNAs on improperly translocated ribosomes. Back-translocation proceeds from a post-translocation (POST) complex to a pre-translocation (PRE) complex, thus giving elongation factor G a second chance to translocate the tRNAs correctly. Binds to ribosomes in a GTP-dependent manner. This Alteromonas mediterranea (strain DSM 17117 / CIP 110805 / LMG 28347 / Deep ecotype) protein is Elongation factor 4.